Reading from the N-terminus, the 191-residue chain is NAD(P)H-quinone oxidoreductase subunit L, chloroplastic (191 aa).

The transit peptide at Met-1–Asn-46 directs the protein to the chloroplast. 3 helical membrane passes run Thr-61–Ile-81, Val-93–Met-113, and Tyr-129–Leu-149.

The protein belongs to the NDH complex subunit L family. Part of the chloroplast NDH complex, composed of a mixture of chloroplast and nucleus encoded subunits. Component of the NDH subcomplex A, at least composed of ndhH, ndhI, ndhJ, ndhK, ndhL, ndhM, ndhN and ndhO.

It is found in the plastid. The protein resides in the chloroplast thylakoid membrane. It carries out the reaction a plastoquinone + NADH + (n+1) H(+)(in) = a plastoquinol + NAD(+) + n H(+)(out). It catalyses the reaction a plastoquinone + NADPH + (n+1) H(+)(in) = a plastoquinol + NADP(+) + n H(+)(out). NDH shuttles electrons from NAD(P)H:plastoquinone, via FMN and iron-sulfur (Fe-S) centers, to quinones in the photosynthetic chain and possibly in a chloroplast respiratory chain. The immediate electron acceptor for the enzyme in this species is believed to be plastoquinone. Couples the redox reaction to proton translocation, and thus conserves the redox energy in a proton gradient. The chain is NAD(P)H-quinone oxidoreductase subunit L, chloroplastic from Arabidopsis thaliana (Mouse-ear cress).